Reading from the N-terminus, the 524-residue chain is Bifunctional purine biosynthesis protein PurH (524 aa).

The MGS-like domain occupies 1-145 (MIKQALLSVS…KNHRDVTVIV (145 aa)).

The protein belongs to the PurH family.

The catalysed reaction is (6R)-10-formyltetrahydrofolate + 5-amino-1-(5-phospho-beta-D-ribosyl)imidazole-4-carboxamide = 5-formamido-1-(5-phospho-D-ribosyl)imidazole-4-carboxamide + (6S)-5,6,7,8-tetrahydrofolate. It catalyses the reaction IMP + H2O = 5-formamido-1-(5-phospho-D-ribosyl)imidazole-4-carboxamide. It participates in purine metabolism; IMP biosynthesis via de novo pathway; 5-formamido-1-(5-phospho-D-ribosyl)imidazole-4-carboxamide from 5-amino-1-(5-phospho-D-ribosyl)imidazole-4-carboxamide (10-formyl THF route): step 1/1. The protein operates within purine metabolism; IMP biosynthesis via de novo pathway; IMP from 5-formamido-1-(5-phospho-D-ribosyl)imidazole-4-carboxamide: step 1/1. The sequence is that of Bifunctional purine biosynthesis protein PurH from Cupriavidus necator (strain ATCC 17699 / DSM 428 / KCTC 22496 / NCIMB 10442 / H16 / Stanier 337) (Ralstonia eutropha).